A 246-amino-acid polypeptide reads, in one-letter code: Probable transcriptional regulatory protein WD_0484 (246 aa).

Residues 1–22 (MAGHSQFSNIKHRKGAQDAKRS) are disordered.

It belongs to the TACO1 family.

The protein localises to the cytoplasm. This chain is Probable transcriptional regulatory protein WD_0484, found in Wolbachia pipientis wMel.